The primary structure comprises 253 residues: Uridine phosphorylase (253 aa).

This sequence belongs to the PNP/UDP phosphorylase family. Homohexamer.

Its subcellular location is the cytoplasm. The catalysed reaction is uridine + phosphate = alpha-D-ribose 1-phosphate + uracil. Its pathway is pyrimidine metabolism; UMP biosynthesis via salvage pathway; uracil from uridine (phosphorylase route): step 1/1. Functionally, catalyzes the reversible phosphorylytic cleavage of uridine to uracil and ribose-1-phosphate. Shows weak activity towards deoxyuridine and thymidine. The produced molecules are then utilized as carbon and energy sources or in the rescue of pyrimidine bases for nucleotide synthesis. The chain is Uridine phosphorylase from Escherichia coli (strain K12).